The sequence spans 415 residues: uncharacterized protein (415 aa).

[4Fe-4S] cluster is bound by residues Cys-85, Cys-91, Cys-94, and Cys-175. The S-adenosyl-L-methionine site is built by Gln-248, Tyr-276, Glu-297, and Asn-344. Cys-371 acts as the Nucleophile in catalysis.

Belongs to the class I-like SAM-binding methyltransferase superfamily. RNA M5U methyltransferase family.

This is an uncharacterized protein from Leptospira interrogans serogroup Icterohaemorrhagiae serovar copenhageni (strain Fiocruz L1-130).